Consider the following 624-residue polypeptide: Elongation factor 4 (624 aa).

One can recognise a tr-type G domain in the interval 17 to 203; that stretch reads ALIRNFCIIA…RVVRDVPAPV (187 aa). GTP is bound by residues 29 to 34 and 150 to 153; these read DHGKST and NKID.

The protein belongs to the TRAFAC class translation factor GTPase superfamily. Classic translation factor GTPase family. LepA subfamily.

It localises to the cell membrane. The catalysed reaction is GTP + H2O = GDP + phosphate + H(+). Its function is as follows. Required for accurate and efficient protein synthesis under certain stress conditions. May act as a fidelity factor of the translation reaction, by catalyzing a one-codon backward translocation of tRNAs on improperly translocated ribosomes. Back-translocation proceeds from a post-translocation (POST) complex to a pre-translocation (PRE) complex, thus giving elongation factor G a second chance to translocate the tRNAs correctly. Binds to ribosomes in a GTP-dependent manner. This is Elongation factor 4 from Streptomyces griseus subsp. griseus (strain JCM 4626 / CBS 651.72 / NBRC 13350 / KCC S-0626 / ISP 5235).